Consider the following 179-residue polypeptide: Bifunctional protein PyrR (179 aa).

Positions 97 to 109 (IILTDDVLYTGRT) match the PRPP-binding motif.

The protein belongs to the purine/pyrimidine phosphoribosyltransferase family. PyrR subfamily.

It carries out the reaction UMP + diphosphate = 5-phospho-alpha-D-ribose 1-diphosphate + uracil. In terms of biological role, regulates the transcription of the pyrimidine nucleotide (pyr) operon in response to exogenous pyrimidines. Functionally, also displays a weak uracil phosphoribosyltransferase activity which is not physiologically significant. The polypeptide is Bifunctional protein PyrR (Elusimicrobium minutum (strain Pei191)).